We begin with the raw amino-acid sequence, 397 residues long: Phosphoglycerate kinase (397 aa).

Substrate contacts are provided by residues 21 to 23, arginine 37, 60 to 63, arginine 119, and arginine 152; these read DFN and HLGR. ATP contacts are provided by residues lysine 203, glycine 294, glutamate 325, and 354 to 357; that span reads GGDS.

Belongs to the phosphoglycerate kinase family. In terms of assembly, monomer.

The protein resides in the cytoplasm. It catalyses the reaction (2R)-3-phosphoglycerate + ATP = (2R)-3-phospho-glyceroyl phosphate + ADP. Its pathway is carbohydrate degradation; glycolysis; pyruvate from D-glyceraldehyde 3-phosphate: step 2/5. In Chlorobium phaeovibrioides (strain DSM 265 / 1930) (Prosthecochloris vibrioformis (strain DSM 265)), this protein is Phosphoglycerate kinase.